The sequence spans 132 residues: Small ribosomal subunit protein uS8 (132 aa).

It belongs to the universal ribosomal protein uS8 family. As to quaternary structure, part of the 30S ribosomal subunit. Contacts proteins S5 and S12.

In terms of biological role, one of the primary rRNA binding proteins, it binds directly to 16S rRNA central domain where it helps coordinate assembly of the platform of the 30S subunit. This Lacticaseibacillus casei (strain BL23) (Lactobacillus casei) protein is Small ribosomal subunit protein uS8.